The sequence spans 408 residues: Histidine--tRNA ligase (408 aa).

The protein belongs to the class-II aminoacyl-tRNA synthetase family.

The protein localises to the cytoplasm. The enzyme catalyses tRNA(His) + L-histidine + ATP = L-histidyl-tRNA(His) + AMP + diphosphate + H(+). In Methanospirillum hungatei JF-1 (strain ATCC 27890 / DSM 864 / NBRC 100397 / JF-1), this protein is Histidine--tRNA ligase.